A 290-amino-acid chain; its full sequence is Light-independent protochlorophyllide reductase iron-sulfur ATP-binding protein (290 aa).

ATP contacts are provided by residues 10–15 and K39; that span reads GIGKST. Position 14 (S14) interacts with Mg(2+). Positions 95 and 129 each coordinate [4Fe-4S] cluster. 180–181 contacts ATP; the sequence is NR.

The protein belongs to the NifH/BchL/ChlL family. Homodimer. Protochlorophyllide reductase is composed of three subunits; ChlL, ChlN and ChlB. It depends on [4Fe-4S] cluster as a cofactor.

The protein resides in the plastid. The protein localises to the chloroplast. The enzyme catalyses chlorophyllide a + oxidized 2[4Fe-4S]-[ferredoxin] + 2 ADP + 2 phosphate = protochlorophyllide a + reduced 2[4Fe-4S]-[ferredoxin] + 2 ATP + 2 H2O. It participates in porphyrin-containing compound metabolism; chlorophyll biosynthesis (light-independent). Its function is as follows. Component of the dark-operative protochlorophyllide reductase (DPOR) that uses Mg-ATP and reduced ferredoxin to reduce ring D of protochlorophyllide (Pchlide) to form chlorophyllide a (Chlide). This reaction is light-independent. The L component serves as a unique electron donor to the NB-component of the complex, and binds Mg-ATP. This Pyropia yezoensis (Susabi-nori) protein is Light-independent protochlorophyllide reductase iron-sulfur ATP-binding protein.